A 584-amino-acid chain; its full sequence is Cytosolic Fe-S cluster assembly factor NAR1 (584 aa).

[4Fe-4S] cluster is bound by residues Cys-20, Cys-81, Cys-84, Cys-87, Cys-190, Cys-245, Cys-465, and Cys-469.

Belongs to the NARF family.

In terms of biological role, component of the cytosolic Fe/S protein assembly machinery. Required for maturation of extramitochondrial Fe/S proteins. May play a role in the transfer of pre-assembled Fe/S clusters to target apoproteins. This is Cytosolic Fe-S cluster assembly factor NAR1 (NAR1) from Candida dubliniensis (strain CD36 / ATCC MYA-646 / CBS 7987 / NCPF 3949 / NRRL Y-17841) (Yeast).